The chain runs to 330 residues: Growth hormone-regulated TBC protein 6 (330 aa).

The Rab-GAP TBC domain occupies 78-256 (GIPHTFRKEL…RLWDCLIYEG (179 aa)).

The polypeptide is Growth hormone-regulated TBC protein 6 (tbc-6) (Caenorhabditis elegans).